A 720-amino-acid polypeptide reads, in one-letter code: Asp/Glu-specific dipeptidyl-peptidase (720 aa).

The N-terminal stretch at 1-21 (MKKRLLLPLFAALCLSQIAHA) is a signal peptide. Cys69 and Cys86 are oxidised to a cystine. Catalysis depends on charge relay system residues His85, Asp227, and Ser655.

The protein belongs to the peptidase S46 family. As to quaternary structure, homodimer.

Its subcellular location is the cell surface. With respect to regulation, enzyme activity is completely blocked by diisopropyl-fluorophosphates, moderately by phenylmethylsulfonyl fluoride (PMSF) and 4-(2-methyl)benzenesulfonyl fluoride, and slightly by pepstatin in vitro. Its function is as follows. Catalyzes the removal of dipeptides from the N-terminus of oligopeptides. Shows a strict specificity for acidic residues (Asp or Glu) in the P1 position, and has a hydrophobic residue preference at the P2 position. Preferentially cleaves the synthetic substrate Leu-Asp-methylcoumaryl-7-amide (Leu-Asp-MCA) as compared to Leu-Glu-MCA. Is involved in amino acid metabolism and bacterial growth of asaccharolytic P.gingivalis, that utilizes amino acids from extracellular proteinaceous nutrients as energy and carbon sources. The polypeptide is Asp/Glu-specific dipeptidyl-peptidase (Porphyromonas gingivalis (strain ATCC 33277 / DSM 20709 / CIP 103683 / JCM 12257 / NCTC 11834 / 2561)).